The chain runs to 412 residues: Solute carrier family 22 member 18 (412 aa).

10 helical membrane passes run 16-36 (GIII…FMQF), 51-71 (VSFG…GPVF), 117-137 (LPAA…DLTA), 148-168 (LGLC…TLST), 176-196 (AFLA…CIPV), 232-252 (FLVK…FSII), 264-284 (AGYL…LVIG), 294-314 (ALLR…ALMS), 316-336 (VFHF…LNIV), and 380-400 (GVSI…LVLW).

Belongs to the major facilitator (TC 2.A.1) superfamily. Organic cation transporter (TC 2.A.1.19) family.

It localises to the apical cell membrane. Its function is as follows. May act as a transporter of organic cations based on a proton efflux antiport mechanism. May play a role in the transport of chloroquine and quinidine-related compounds in kidney. Plays a role in the regulation of lipid metabolism. This chain is Solute carrier family 22 member 18 (Slc67a1), found in Rattus norvegicus (Rat).